The following is a 605-amino-acid chain: Bifunctional purine biosynthesis protein ADE16 (605 aa).

Positions 1 to 147 constitute an MGS-like domain; sequence MSSEAPIALL…KNHGRVSIIS (147 aa). IMP is bound by residues 35 to 38, 65 to 68, 102 to 103, and 126 to 127; these read SGGT, RVKT, CN, and DI. The active-site Proton donor/acceptor; for FAICAR cyclization activity is K138. Residues 219–220, H279, G327, D350, N442, and R462 contribute to the 5-amino-1-(5-phospho-beta-D-ribosyl)imidazole-4-carboxamide site; that span reads RY. H279 serves as the catalytic Proton acceptor; for AICAR formyltransferase activity. I463 contributes to the (6R)-10-formyltetrahydrofolate binding site. Position 554 (F554) interacts with 5-amino-1-(5-phospho-beta-D-ribosyl)imidazole-4-carboxamide. D559 contributes to the (6R)-10-formyltetrahydrofolate binding site. 5-amino-1-(5-phospho-beta-D-ribosyl)imidazole-4-carboxamide is bound at residue R601.

This sequence belongs to the PurH family. In terms of assembly, homodimer.

It is found in the cytoplasm. Its subcellular location is the cytosol. The enzyme catalyses (6R)-10-formyltetrahydrofolate + 5-amino-1-(5-phospho-beta-D-ribosyl)imidazole-4-carboxamide = 5-formamido-1-(5-phospho-D-ribosyl)imidazole-4-carboxamide + (6S)-5,6,7,8-tetrahydrofolate. It carries out the reaction IMP + H2O = 5-formamido-1-(5-phospho-D-ribosyl)imidazole-4-carboxamide. Its pathway is purine metabolism; IMP biosynthesis via de novo pathway; 5-formamido-1-(5-phospho-D-ribosyl)imidazole-4-carboxamide from 5-amino-1-(5-phospho-D-ribosyl)imidazole-4-carboxamide (10-formyl THF route): step 1/1. The protein operates within purine metabolism; IMP biosynthesis via de novo pathway; IMP from 5-formamido-1-(5-phospho-D-ribosyl)imidazole-4-carboxamide: step 1/1. In terms of biological role, bifunctional enzyme that catalyzes the last two steps of purine biosynthesis. Acts as a transformylase that incorporates a formyl group to the AMP analog AICAR (5-amino-1-(5-phospho-beta-D-ribosyl)imidazole-4-carboxamide) to produce the intermediate formyl-AICAR (FAICAR). Also catalyzes the cyclization of FAICAR to IMP. The polypeptide is Bifunctional purine biosynthesis protein ADE16 (Cryptococcus neoformans var. grubii serotype A (strain H99 / ATCC 208821 / CBS 10515 / FGSC 9487) (Filobasidiella neoformans var. grubii)).